Consider the following 836-residue polypeptide: Protein O-mannosyl-transferase tmtc2 (836 aa).

A helical membrane pass occupies residues 1 to 21; it reads MIAELLSSALGLLLYLNTLGA. The Extracellular portion of the chain corresponds to 22-77; the sequence is DFCYDDSRAIKTNQDLLPETPWNHIFFNDFWGTLLTHSGSHKSYRPLCTLSFRLNY. The helical transmembrane segment at 78–98 threads the bilayer; that stretch reads LFGGLDPWNYHLVNVLLHSAV. Residues 99–107 lie on the Cytoplasmic side of the membrane; that stretch reads TGLFTNLCK. Residues 108-128 traverse the membrane as a helical segment; sequence ALFGSGCWTLIAGLLFASHPI. Residues 129-132 are Extracellular-facing; the sequence is HTEA. A helical transmembrane segment spans residues 133–153; the sequence is VSGIVGRADVGSGLFFLLSLL. At 154–164 the chain is on the cytoplasmic side; it reads CYMKHCSTRGY. Residues 165 to 185 traverse the membrane as a helical segment; it reads SLSSWCWILCAGFWAACSMLW. Residues 186-188 are Extracellular-facing; sequence KEQ. A helical transmembrane segment spans residues 189-209; it reads GVTVLAVSAVYDVFVFHKLKM. Topologically, residues 210-220 are cytoplasmic; sequence NQIISVVFKEK. Residues 221-241 traverse the membrane as a helical segment; that stretch reads NVSFFFSVGLLFAWGVILLGA. The Extracellular portion of the chain corresponds to 242-312; it reads RFYWMGNTPP…KTITDWRNIH (71 aa). The chain crosses the membrane as a helical span at residues 313–333; the sequence is TVAFYILLILLAYSSLKGSAI. At 334–392 the chain is on the cytoplasmic side; sequence KRDCNGKVFMNGKQNTNGHSCQSDLEHKNAEQNPVIASKLENGVKHHNSHEMQLPSTEN. Residues 393–413 form a helical membrane-spanning segment; the sequence is IVVLALSLLIVPFVPASNLFF. Tyr414 is a topological domain (extracellular). The chain crosses the membrane as a helical span at residues 415-435; it reads VGFVIAERVLYIPSMGFCLLV. The Cytoplasmic segment spans residues 436–449; sequence TVGARALYIKAQKN. A helical membrane pass occupies residues 450–470; the sequence is ILKNLLFYATAALIVFYGLKT. Topologically, residues 471-836 are extracellular; sequence VVRNGDWKNE…EKQGLKNSKT (366 aa). TPR repeat units lie at residues 493–526, 527–560, 561–594, 606–639, 643–676, 677–710, 711–744, 745–778, and 779–812; these read AKAWGNLGNVLKSQSKIDEAENAYRNALYYRSNM, ADMLYNLGLLLQENSKFSEALHYYKLAIGSRPTL, ASGYLNTGIILMNQGRTEEARRTFLKCSEIPDEN, TSCLYNLGKLYHEQGQYEDALIVYKEAIQKMPRQ, QSLYNMMGEAYMRLNVVSEAEHWYTESLKSKPDH, IPAHLTYGKLLTLTGRKNEAERYFLKAIQLDPNK, GNCYMHYGQFLLEEGRILEAAEMAKKAAELDSSE, FDVVFNAAHMLRQASLNEEAEKFYKLAAGLRQNY, and PAALMNLGAILHLNGKLEEAEYNYLRALQLKPDD.

This sequence belongs to the TMTC family.

Its subcellular location is the membrane. It is found in the endoplasmic reticulum. It catalyses the reaction a di-trans,poly-cis-dolichyl beta-D-mannosyl phosphate + L-seryl-[protein] = 3-O-(alpha-D-mannosyl)-L-seryl-[protein] + a di-trans,poly-cis-dolichyl phosphate + H(+). The catalysed reaction is a di-trans,poly-cis-dolichyl beta-D-mannosyl phosphate + L-threonyl-[protein] = 3-O-(alpha-D-mannosyl)-L-threonyl-[protein] + a di-trans,poly-cis-dolichyl phosphate + H(+). The protein operates within protein modification; protein glycosylation. In terms of biological role, transfers mannosyl residues to the hydroxyl group of serine or threonine residues. This Xenopus laevis (African clawed frog) protein is Protein O-mannosyl-transferase tmtc2 (tmtc2).